The sequence spans 241 residues: DnaA regulatory inactivator Hda (241 aa).

It belongs to the DnaA family. HdA subfamily. As to quaternary structure, the active form seems to be an ADP-bound monomer. Forms the RIDA complex (regulatory inactivation of DnaA) of ATP-DnaA, ADP-Hda and the DNA-loaded beta sliding clamp (dnaN).

In terms of biological role, mediates the interaction of DNA replication initiator protein DnaA with DNA polymerase subunit beta sliding clamp (dnaN). Stimulates hydrolysis of ATP-DnaA to ADP-DnaA, rendering DnaA inactive for reinitiation, a process called regulatory inhibition of DnaA or RIDA. The chain is DnaA regulatory inactivator Hda from Salmonella agona (strain SL483).